Here is a 300-residue protein sequence, read N- to C-terminus: Cation-efflux pump FieF (300 aa).

6 helical membrane-spanning segments follow: residues 12–32, 39–59, 82–102, 114–134, 151–171, and 172–192; these read AAIA…FAWW, ILAA…NLLV, AALA…LTGI, PGVG…LVSF, MLHY…LALS, and WYGW…YILY. D45 and D49 together coordinate Zn(2+). Positions 153 and 157 each coordinate Zn(2+).

It belongs to the cation diffusion facilitator (CDF) transporter (TC 2.A.4) family. FieF subfamily. As to quaternary structure, homodimer.

It is found in the cell inner membrane. The catalysed reaction is Zn(2+)(in) + H(+)(out) = Zn(2+)(out) + H(+)(in). It catalyses the reaction Cd(2+)(in) + H(+)(out) = Cd(2+)(out) + H(+)(in). The enzyme catalyses Fe(2+)(in) + H(+)(out) = Fe(2+)(out) + H(+)(in). Its function is as follows. Divalent metal cation transporter which exports Zn(2+), Cd(2+) and possibly Fe(2+). May be involved in zinc and iron detoxification by efflux. This Escherichia fergusonii (strain ATCC 35469 / DSM 13698 / CCUG 18766 / IAM 14443 / JCM 21226 / LMG 7866 / NBRC 102419 / NCTC 12128 / CDC 0568-73) protein is Cation-efflux pump FieF.